The chain runs to 351 residues: Putative aminodehydroquinate synthase (351 aa).

Residues 65 to 68, 97 to 101, 121 to 122, lysine 134, lysine 143, and 161 to 164 each bind NAD(+); these read EPTK, GTTTD, TS, and YLTT. Residues glutamate 176, histidine 225, and histidine 241 each contribute to the Zn(2+) site.

The protein belongs to the sugar phosphate cyclases superfamily. aDHQS family. NAD(+) serves as cofactor. Requires Co(2+) as cofactor. The cofactor is Zn(2+).

In terms of biological role, may catalyze the conversion of 3,4-dideoxy-4-amino-D-arabino-heptulosonate 7-phosphate (aDAHP) to 5-deoxy-5-amino-3-dehydroquinate (aDHQ). Probably involved in the formation of 3-amino-5-hydroxybenzoic acid (AHBA), the precursor of rifamycin and related ansamycins. The chain is Putative aminodehydroquinate synthase from Amycolatopsis mediterranei (strain S699) (Nocardia mediterranei).